Reading from the N-terminus, the 506-residue chain is Chorion-specific transcription factor GCMb (506 aa).

The GCM DNA-binding region spans 19–174 (LSWDINDPQM…KSETEARRSA (156 aa)). 8 residues coordinate Zn(2+): C81, C87, C91, C118, C121, C130, H157, and H159. Positions 155 to 172 (GVHDHPRPESKSETEARR) are enriched in basic and acidic residues. Positions 155-213 (GVHDHPRPESKSETEARRSAIKRQMASFYQPQKKRIRESEAEENQDSSGHFSNIPPLEN) are disordered. The C-terminal conserved inhibitory domain (CCID) stretch occupies residues 379–395 (LQTVITTTTKVSYQAYQ).

The protein localises to the nucleus. Transcription factor that binds specific sequences on gene promoters and activate their transcription. Through the regulation of gene transcription, may play a role in parathyroid gland development. In Homo sapiens (Human), this protein is Chorion-specific transcription factor GCMb.